Consider the following 418-residue polypeptide: MLHPRARTMLLLSLPAVAIGIASSLILIVVMKIASALQNLLWQRLPGTLGIAQDSPLWIIGVLTLTGIAVGLVIRFSQGHAGPDPACEPLIGAPVPPSALPGLIVALILGLAGGVSLGPEHPIMTVNIALAVAIGARLLPRVNRMEWTILASAGTIGALFGTPVAAALIFSQTLNGSSEVPLWDRLFAPLMAAAAGALTTGLFFHPHFSLPITHYGQMEMTDILSGAIVAAIAIAAGMVAVWCLPRLHAMMNQMKNPVLVLGIGGFILGILGVIGGPVSLFKGLDEMQQMVANQAFSTSDYFLLAVIKLAALVVAAASGFRGGRIFPAVFVGVALGLMLHEHVPAVPAAITVSCAILGIVLVVTRDGWLSLFMAAVVVPNTTLLPLLCIVMLPAWLLLAGKPMMMVNRPKQQPPHDNV.

The next 12 helical transmembrane spans lie at 10–30, 54–74, 99–119, 120–140, 149–169, 186–206, 223–243, 258–278, 300–320, 322–342, 343–363, and 371–391; these read LLLS…LIVV, DSPL…GLVI, ALPG…SLGP, EHPI…RLLP, ILAS…AALI, LFAP…FFHP, ILSG…AVWC, VLVL…GGPV, DYFL…ASGF, GGRI…LHEH, VPAV…VLVV, and LFMA…CIVM.

The protein belongs to the chloride channel (TC 2.A.49) family.

It is found in the cell membrane. This is Putative ion-transport protein YfeO from Escherichia coli O139:H28 (strain E24377A / ETEC).